Reading from the N-terminus, the 142-residue chain is Putative pre-16S rRNA nuclease (142 aa).

This sequence belongs to the YqgF nuclease family.

It is found in the cytoplasm. Its function is as follows. Could be a nuclease involved in processing of the 5'-end of pre-16S rRNA. This Photobacterium profundum (strain SS9) protein is Putative pre-16S rRNA nuclease.